A 567-amino-acid chain; its full sequence is Protein phosphatase 1 regulatory inhibitor subunit 16B (567 aa).

Positions 15–55 form a coiled coil; sequence EKVPTLERLRAAQKRRAQQLKKWAQYEQDLQHRKRKHERKR. At S69 the chain carries Phosphoserine. 4 ANK repeats span residues 100 to 129, 133 to 162, 228 to 257, and 261 to 290; these read DGLTALHQCCIDNFEEIVKLLLSHGANVNA, ELWTPLHAAATCGHINLVKILVQYGADLLA, QGATLLHIAGANGYLRAAELLLDHGVRVDV, and DGWEPLHAAAFWGQMQMAELLVSHGASLSA. Phosphoserine is present on residues S333, S337, and S350. The interval 378 to 403 is disordered; it reads RTSTYNGDIRETRTDQENKDPNPRLE. A compositionally biased stretch (basic and acidic residues) spans 385 to 403; the sequence is DIRETRTDQENKDPNPRLE. S476 bears the Phosphoserine mark. The segment covering 504 to 515 has biased composition (polar residues); sequence SSMARTGESSSE. The tract at residues 504–525 is disordered; sequence SSMARTGESSSEGKAPLIGGRT. The ANK 5 repeat unit spans residues 530–559; sequence SNGTSVYYTVTSGDPPLLKFKAPIEEMEEK. C563 is lipidated: S-palmitoyl cysteine. C564 carries the cysteine methyl ester modification. C564 is lipidated: S-farnesyl cysteine. Positions 565–567 are cleaved as a propeptide — removed in mature form; sequence RIS.

As to quaternary structure, interacts with PPP1CA, PPP1CB and MSN. Interacts (via its fourth ankyrin repeat) with the mature dimeric form of RPSA/LAMR1. Interacts with EEF1A1. Interacts with PTEN. Interacts with ECE1. Post-translationally, phosphorylated by PKA and, after PKA priming, by GSK3B. Phosphorylation by GSK3B reduces its association with PP1C and enhances PP1C activity. Dephosphorylation by its associated PP1C results in enhanced association with PP1C, but reduced PP1C activity.

The protein localises to the cell membrane. It is found in the nucleus. It localises to the cell projection. Regulator of protein phosphatase 1 (PP1) that acts as a positive regulator of pulmonary endothelial cell (EC) barrier function. Involved in the regulation of the PI3K/AKT signaling pathway, angiogenesis and endothelial cell proliferation. Regulates angiogenesis and endothelial cell proliferation through the control of ECE1 dephosphorylation, trafficking and activity. Protects the endothelial barrier from lipopolysaccharide (LPS)-induced vascular leakage. Involved in the regulation of endothelial cell filopodia extension. May be a downstream target for TGF-beta1 signaling cascade in endothelial cells. Involved in PKA-mediated moesin dephosphorylation which is important in EC barrier protection against thrombin stimulation. Promotes the interaction of PPP1CA with RPSA/LAMR1 and in turn facilitates the dephosphorylation of RPSA/LAMR1. Involved in the dephosphorylation of EEF1A1. This is Protein phosphatase 1 regulatory inhibitor subunit 16B (PPP1R16B) from Homo sapiens (Human).